The chain runs to 90 residues: Guanine nucleotide-binding protein subunit gamma (90 aa).

Cys-86 carries S-palmitoyl cysteine lipidation. A Cysteine methyl ester modification is found at Cys-87. The S-farnesyl cysteine moiety is linked to residue Cys-87. Residues 88-90 (TIM) constitute a propeptide, removed in mature form.

The protein belongs to the G protein gamma family. G proteins are composed of 3 units, alpha, beta and gamma.

Its subcellular location is the membrane. This Kluyveromyces lactis (strain ATCC 8585 / CBS 2359 / DSM 70799 / NBRC 1267 / NRRL Y-1140 / WM37) (Yeast) protein is Guanine nucleotide-binding protein subunit gamma.